The primary structure comprises 497 residues: GTPase-activating protein GYP8 (497 aa).

One can recognise a Rab-GAP TBC domain in the interval 69 to 281 (FVNNSLRKDC…QIFDMTISMQ (213 aa)).

This is GTPase-activating protein GYP8 (GYP8) from Saccharomyces cerevisiae (strain ATCC 204508 / S288c) (Baker's yeast).